The sequence spans 200 residues: Peptidyl-tRNA hydrolase (200 aa).

Residue tyrosine 15 coordinates tRNA. Histidine 20 acts as the Proton acceptor in catalysis. Residues phenylalanine 66, asparagine 68, and asparagine 114 each contribute to the tRNA site.

This sequence belongs to the PTH family. In terms of assembly, monomer.

It localises to the cytoplasm. It carries out the reaction an N-acyl-L-alpha-aminoacyl-tRNA + H2O = an N-acyl-L-amino acid + a tRNA + H(+). In terms of biological role, hydrolyzes ribosome-free peptidyl-tRNAs (with 1 or more amino acids incorporated), which drop off the ribosome during protein synthesis, or as a result of ribosome stalling. Functionally, catalyzes the release of premature peptidyl moieties from peptidyl-tRNA molecules trapped in stalled 50S ribosomal subunits, and thus maintains levels of free tRNAs and 50S ribosomes. This Ralstonia pickettii (strain 12J) protein is Peptidyl-tRNA hydrolase.